The following is a 343-amino-acid chain: Heat-inducible transcription repressor HrcA (343 aa).

It belongs to the HrcA family.

In terms of biological role, negative regulator of class I heat shock genes (grpE-dnaK-dnaJ and groELS operons). Prevents heat-shock induction of these operons. This is Heat-inducible transcription repressor HrcA from Mycolicibacterium paratuberculosis (strain ATCC BAA-968 / K-10) (Mycobacterium paratuberculosis).